Reading from the N-terminus, the 607-residue chain is Dolichyl-diphosphooligosaccharide--protein glycosyltransferase subunit 1 (607 aa).

Residues 1 to 23 (MEAPVARLFLLLLLGSWTPAPGS) form the signal peptide. The Lumenal portion of the chain corresponds to 24–434 (ASSEAPPLIN…VVHYTFNKVL (411 aa)). Lysine 187 carries the post-translational modification N6-acetyllysine. A glycan (N-linked (GlcNAc...) asparagine) is linked at asparagine 299. A helical membrane pass occupies residues 435–455 (MLQEPLLVVAAFYILFFTVII). At 456–607 (YVRLDFSITK…TKIDHILDAL (152 aa)) the chain is on the cytoplasmic side. Lysine 538 carries the N6-acetyllysine; alternate modification. Residue lysine 538 forms a Glycyl lysine isopeptide (Lys-Gly) (interchain with G-Cter in SUMO2); alternate linkage.

This sequence belongs to the OST1 family. In terms of assembly, component of the oligosaccharyltransferase (OST) complex. OST exists in two different complex forms which contain common core subunits RPN1, RPN2, OST48, OST4, DAD1 and TMEM258, either STT3A or STT3B as catalytic subunits, and form-specific accessory subunits. STT3A complex assembly occurs through the formation of 3 subcomplexes. Subcomplex 1 contains RPN1 and TMEM258, subcomplex 2 contains the STT3A-specific subunits STT3A, DC2/OSTC, and KCP2 as well as the core subunit OST4, and subcomplex 3 contains RPN2, DAD1, and OST48. The STT3A complex can form stable complexes with the Sec61 complex or with both the Sec61 and TRAP complexes. Interacts with TMEM35A/NACHO. In terms of processing, ubiquitinated by the ECS(ASB11) complex. Ufmylated by UFL1 in response to endoplasmic reticulum stress, promoting reticulophagy of endoplasmic reticulum sheets.

It is found in the endoplasmic reticulum membrane. It participates in protein modification; protein glycosylation. Its function is as follows. Subunit of the oligosaccharyl transferase (OST) complex that catalyzes the initial transfer of a defined glycan (Glc(3)Man(9)GlcNAc(2) in eukaryotes) from the lipid carrier dolichol-pyrophosphate to an asparagine residue within an Asn-X-Ser/Thr consensus motif in nascent polypeptide chains, the first step in protein N-glycosylation. N-glycosylation occurs cotranslationally and the complex associates with the Sec61 complex at the channel-forming translocon complex that mediates protein translocation across the endoplasmic reticulum (ER). All subunits are required for a maximal enzyme activity. The chain is Dolichyl-diphosphooligosaccharide--protein glycosyltransferase subunit 1 from Macaca fascicularis (Crab-eating macaque).